Reading from the N-terminus, the 91-residue chain is MASGSSKAVIKNADMSEEMQADAVDCATQALEKYNIEKDIAAYIKKEFDRKHNPTWHCIVGRNFGSYVTHETKHFIYFYLGQVAILLFKSG.

This sequence belongs to the dynein light chain family. As to quaternary structure, consists of at least 3 heavy chains (alpha, beta and gamma), 2 intermediate chains and 8 light chains.

The protein localises to the cytoplasm. It is found in the cytoskeleton. The protein resides in the flagellum axoneme. In Chlamydomonas reinhardtii (Chlamydomonas smithii), this protein is Dynein 8 kDa light chain, flagellar outer arm.